The following is a 579-amino-acid chain: Eukaryotic translation initiation factor 3 subunit D (579 aa).

Disordered regions lie at residues 1–20, 51–72, and 109–170; these read MASF…GPAS, NASG…RARD, and RRGG…FGWK. The span at 51–64 shows a compositional bias: low complexity; the sequence is NASGASNDAANARG. Gly residues predominate over residues 120–167; the sequence is GGRGGRGGAGGAGAAGGRGASKFGAGAGRGARGGRGGAAGARRGGGRF. The interval 307–321 is RNA gate; it reads AFDYLTVNENAADPP.

The protein belongs to the eIF-3 subunit D family. As to quaternary structure, component of the eukaryotic translation initiation factor 3 (eIF-3) complex.

The protein localises to the cytoplasm. Its function is as follows. mRNA cap-binding component of the eukaryotic translation initiation factor 3 (eIF-3) complex, which is involved in protein synthesis of a specialized repertoire of mRNAs and, together with other initiation factors, stimulates binding of mRNA and methionyl-tRNAi to the 40S ribosome. The eIF-3 complex specifically targets and initiates translation of a subset of mRNAs involved in cell proliferation. In the eIF-3 complex, eif3d specifically recognizes and binds the 7-methylguanosine cap of a subset of mRNAs. This chain is Eukaryotic translation initiation factor 3 subunit D, found in Mycosarcoma maydis (Corn smut fungus).